Here is a 245-residue protein sequence, read N- to C-terminus: uncharacterized protein (245 aa).

This is an uncharacterized protein from Escherichia coli.